We begin with the raw amino-acid sequence, 235 residues long: MPKLSKRITGLLAKVEDRVYQPIEAIQLVKENATAKFDETIEAHVRLGIDPKYTDQQLRTTVALPQGTGQSVRIAVITRGEKLAEAKTAGAELAGDDDLVESIGKGQMDFDLLIATPDMMPKVAKLGRVLGPRGLMPNPKAGTVTTDLAAAIKEFKAGKLEFRADRAGIVHVRFGKASFSADALLENLKTLQETIDRNKPSGAKGRYWKSLYITSTMGPSVEVDVTALQDIEEDA.

Belongs to the universal ribosomal protein uL1 family. Part of the 50S ribosomal subunit.

Functionally, binds directly to 23S rRNA. The L1 stalk is quite mobile in the ribosome, and is involved in E site tRNA release. In terms of biological role, protein L1 is also a translational repressor protein, it controls the translation of the L11 operon by binding to its mRNA. The protein is Large ribosomal subunit protein uL1 of Prochlorococcus marinus (strain MIT 9303).